A 207-amino-acid chain; its full sequence is Germin-like protein 1 (207 aa).

A signal peptide spans 1–17; the sequence is MLRIIFLLSLLFALSND. Residues Cys23 and Cys38 are joined by a disulfide bond. The Cupin type-1 domain occupies 51 to 197; it reads FSLGTPGNTT…TTFLPPATVK (147 aa). Asn58 carries N-linked (GlcNAc...) asparagine glycosylation. Mn(2+) contacts are provided by His99, His101, Glu106, and His145.

It belongs to the germin family. In terms of assembly, oligomer (believed to be a pentamer but probably hexamer).

It is found in the secreted. Its subcellular location is the extracellular space. It localises to the apoplast. Its function is as follows. May play a role in plant defense. Probably has no oxalate oxidase activity even if the active site is conserved. The chain is Germin-like protein 1 (GER1) from Brassica napus (Rape).